A 510-amino-acid chain; its full sequence is ATP synthase subunit alpha (510 aa).

169-176 contacts ATP; the sequence is GDRQTGKT.

This sequence belongs to the ATPase alpha/beta chains family. F-type ATPases have 2 components, CF(1) - the catalytic core - and CF(0) - the membrane proton channel. CF(1) has five subunits: alpha(3), beta(3), gamma(1), delta(1), epsilon(1). CF(0) has three main subunits: a(1), b(2) and c(9-12). The alpha and beta chains form an alternating ring which encloses part of the gamma chain. CF(1) is attached to CF(0) by a central stalk formed by the gamma and epsilon chains, while a peripheral stalk is formed by the delta and b chains.

It is found in the cell inner membrane. The catalysed reaction is ATP + H2O + 4 H(+)(in) = ADP + phosphate + 5 H(+)(out). Its function is as follows. Produces ATP from ADP in the presence of a proton gradient across the membrane. The alpha chain is a regulatory subunit. This is ATP synthase subunit alpha from Anaeromyxobacter sp. (strain K).